Reading from the N-terminus, the 337-residue chain is uncharacterized protein (337 aa).

2 consecutive transmembrane segments (helical) span residues 241 to 261 and 273 to 293; these read FTLL…GAFI and ASLI…IGII.

Belongs to the glycosyltransferase 2 family.

It localises to the cell membrane. This is an uncharacterized protein from Bacillus subtilis (strain 168).